The following is a 582-amino-acid chain: V-type ATP synthase alpha chain (582 aa).

ATP is bound at residue glycine 231–threonine 238.

Belongs to the ATPase alpha/beta chains family.

The enzyme catalyses ATP + H2O + 4 H(+)(in) = ADP + phosphate + 5 H(+)(out). Produces ATP from ADP in the presence of a proton gradient across the membrane. The V-type alpha chain is a catalytic subunit. The chain is V-type ATP synthase alpha chain from Deinococcus geothermalis (strain DSM 11300 / CIP 105573 / AG-3a).